Consider the following 86-residue polypeptide: Small ribosomal subunit protein bS20 (86 aa).

Positions 1 to 26 (MANIKSAKKRAITSEKRRQHNASRRS) are disordered.

Belongs to the bacterial ribosomal protein bS20 family.

Its function is as follows. Binds directly to 16S ribosomal RNA. This Photobacterium profundum (strain SS9) protein is Small ribosomal subunit protein bS20.